The chain runs to 178 residues: CASP-like protein 2A2 (178 aa).

Over 1–22 (MDKTDQTAIDGSALELNRTEKT) the chain is Cytoplasmic. A helical membrane pass occupies residues 23 to 43 (VEAVLRVASMALSITGLVIMI). Residues 44-69 (KNSISNDFGSLSYSNLGAFMYLVGAN) are Extracellular-facing. The helical transmembrane segment at 70–90 (GVCAAYSLLSALAILALPCPI) threads the bilayer. The Cytoplasmic segment spans residues 91-96 (SKVQVR). Residues 97 to 117 (TLFLLDQVVTYVVLAAGAVSA) traverse the membrane as a helical segment. Residues 118 to 145 (ETVYLAYYGNIPITWSSACDSYGIFCHK) are Extracellular-facing. The chain crosses the membrane as a helical span at residues 146–166 (ALISVVFTFVVSLLYMLLSLI). The Cytoplasmic portion of the chain corresponds to 167–178 (SSYRLFSRFEAP).

Belongs to the Casparian strip membrane proteins (CASP) family. Homodimer and heterodimers.

The protein localises to the cell membrane. In Arabidopsis lyrata subsp. lyrata (Lyre-leaved rock-cress), this protein is CASP-like protein 2A2.